We begin with the raw amino-acid sequence, 268 residues long: Fibroblast growth factor 8 (268 aa).

Positions 1-22 (MGSPRSALSCLLLHLLVLCLQA) are cleaved as a signal peptide. Position 23 is a pyrrolidone carboxylic acid (glutamine 23). A disordered region spans residues 29–87 (QKRGPGAGNPADTLGQGHEDRPFGQRSRAGKNFTNPAPNYPEEGSKEQRDSVLPKVTQR). N-linked (GlcNAc...) asparagine glycosylation occurs at asparagine 60. The span at 71–80 (EGSKEQRDSV) shows a compositional bias: basic and acidic residues. Asparagine 190 carries N-linked (GlcNAc...) asparagine glycosylation.

This sequence belongs to the heparin-binding growth factors family. Monomer. Homodimer. Interacts with FGFR1, FGFR2, FGFR3 and FGFR4. Affinity between fibroblast growth factors (FGFs) and their receptors is increased by heparan sulfate glycosaminoglycans that function as coreceptors. In terms of processing, the N-terminus is blocked. As to expression, absent in normal mammary glands and detected only in adult testis and ovary and in midgestational embryos.

It is found in the secreted. Its function is as follows. Plays an important role in the regulation of embryonic development, cell proliferation, cell differentiation and cell migration. Required for normal brain, eye, ear and limb development during embryogenesis. Required for normal development of the gonadotropin-releasing hormone (GnRH) neuronal system. Plays a role in neurite outgrowth in hippocampal cells. Cooperates with Wnt-1 in mouse mammary tumor virus-induced murine mammary tumorigenesis. This Mus musculus (Mouse) protein is Fibroblast growth factor 8 (Fgf8).